The sequence spans 403 residues: MNTIFSARIMKRLALTTALCTAFISAAHADDLNIKTMIPGVPQIDAESYILIDYNSGKVLAEQNADVRRDPASLTKMMTSYVIGQAMKAGKFKETDLVTIGNDAWATGNPVFKGSSLMFLKPGMQVPVSQLIRGINLQSGNDACVAMADFAAGSQDAFVGLMNSYVNALGLKNTHFQTVHGLDADGQYSSARDMALIGQALIRDVPNEYSIYKEKEFTFNGIRQLNRNGLLWDNSLNVDGIKTGHTDKAGYNLVASATEGQMRLISAVMGGRTFKGREAESKKLLTWGFRFFETVNPLKVGKEFASEPVWFGDSDRASLGVDKDVYLTIPRGRMKDLKASYVLNSSELHAPLQKNQVVGTINFQLDGKTIEQRPLVVLQEIPEGNFFGKIIDYIKLMFHHWFG.

An N-terminal signal peptide occupies residues 1–29 (MNTIFSARIMKRLALTTALCTAFISAAHA). The active-site Acyl-ester intermediate is serine 73. The Proton acceptor role is filled by lysine 76. Serine 139 is a catalytic residue. Lysine 242 is a binding site for substrate.

It belongs to the peptidase S11 family.

It is found in the cell inner membrane. It carries out the reaction Preferential cleavage: (Ac)2-L-Lys-D-Ala-|-D-Ala. Also transpeptidation of peptidyl-alanyl moieties that are N-acyl substituents of D-alanine.. It functions in the pathway cell wall biogenesis; peptidoglycan biosynthesis. Its function is as follows. Removes C-terminal D-alanyl residues from sugar-peptide cell wall precursors. This is D-alanyl-D-alanine carboxypeptidase DacA (dacA) from Escherichia coli O157:H7.